We begin with the raw amino-acid sequence, 350 residues long: tRNA uridine(34) hydroxylase (350 aa).

Positions 146 to 240 (DDPDAVFIDM…YARRARAQGL (95 aa)) constitute a Rhodanese domain. Catalysis depends on cysteine 200, which acts as the Cysteine persulfide intermediate. Positions 319 to 328 (RRRRAGRENG) are enriched in basic and acidic residues. The segment at 319–350 (RRRRAGRENGNKIFNKSRGRLNSKLSIPDPAE) is disordered.

Belongs to the TrhO family.

The enzyme catalyses uridine(34) in tRNA + AH2 + O2 = 5-hydroxyuridine(34) in tRNA + A + H2O. Catalyzes oxygen-dependent 5-hydroxyuridine (ho5U) modification at position 34 in tRNAs. The chain is tRNA uridine(34) hydroxylase from Salmonella paratyphi B (strain ATCC BAA-1250 / SPB7).